We begin with the raw amino-acid sequence, 211 residues long: Stromal cell-derived factor 2 (211 aa).

An N-terminal signal peptide occupies residues 1–18 (MAVLSLLLLGGLWSAVGA). MIR domains are found at residues 21–75 (MAVV…IRGK), 83–138 (GTPI…VLCN), and 139–193 (GPYW…AMEG).

In terms of tissue distribution, ubiquitously expressed with highest expression in liver and kidney.

It is found in the secreted. This chain is Stromal cell-derived factor 2 (Sdf2), found in Mus musculus (Mouse).